Reading from the N-terminus, the 962-residue chain is CRACD-like protein (962 aa).

Disordered stretches follow at residues 38-102, 131-174, and 212-871; these read GKKK…PESG, NVKM…HDVG, and PAES…QEPV. Positions 46 to 61 are enriched in polar residues; that stretch reads PSSTGSSTWKQSQTRN. Position 92 is a phosphoserine (S92). Positions 224–244 are enriched in basic residues; sequence AKHKLQVKPRNQRSSKMRRLS. The span at 245–256 shows a compositional bias: polar residues; sequence SRAQSESLSDLT. The span at 266 to 278 shows a compositional bias: basic and acidic residues; it reads EKPLLEVSPEERP. Pro residues-rich tracts occupy residues 292–303 and 354–365; these read EPGPPAPLPPPG and PPSPPEGPPNPG. A compositionally biased stretch (low complexity) spans 407–425; sequence PEGDTTPPETDPAATSEAP. 2 stretches are compositionally biased toward basic and acidic residues: residues 429 to 440 and 459 to 480; these read DGPERSVPKEAE and EPER…ERIG. S490 carries the post-translational modification Phosphoserine. A compositionally biased stretch (low complexity) spans 503–521; the sequence is AAASEGPAASPPLAAAESP. Basic and acidic residues-rich tracts occupy residues 536 to 546, 555 to 570, 631 to 642, and 709 to 728; these read APERPKAERAE, AAPE…ELRG, KLAERGPQDSGD, and YSAE…EEKC. Pro residues predominate over residues 753–764; it reads PEPLSSKPPLPR. 2 stretches are compositionally biased toward basic and acidic residues: residues 784–806 and 844–869; these read PGER…RGAE and QEDK…RGQE.

In Homo sapiens (Human), this protein is CRACD-like protein.